The sequence spans 166 residues: Interferon gamma (166 aa).

The first 23 residues, 1–23 (MKYTSYFLALQLCLLLGFSGSYG), serve as a signal peptide directing secretion. Position 24 is a pyrrolidone carboxylic acid (Q24). Residues N39 and N106 are each glycosylated (N-linked (GlcNAc...) asparagine).

The protein belongs to the type II (or gamma) interferon family. As to quaternary structure, homodimer. Interacts with IFNGR1 (via extracellular domain); this interaction promotes IFNGR1 dimerization. Released primarily from activated T lymphocytes.

The protein resides in the secreted. In terms of biological role, type II interferon produced by immune cells such as T-cells and NK cells that plays crucial roles in antimicrobial, antiviral, and antitumor responses by activating effector immune cells and enhancing antigen presentation. Primarily signals through the JAK-STAT pathway after interaction with its receptor IFNGR1 to affect gene regulation. Upon IFNG binding, IFNGR1 intracellular domain opens out to allow association of downstream signaling components JAK2, JAK1 and STAT1, leading to STAT1 activation, nuclear translocation and transcription of IFNG-regulated genes. Many of the induced genes are transcription factors such as IRF1 that are able to further drive regulation of a next wave of transcription. Plays a role in class I antigen presentation pathway by inducing a replacement of catalytic proteasome subunits with immunoproteasome subunits. In turn, increases the quantity, quality, and repertoire of peptides for class I MHC loading. Increases the efficiency of peptide generation also by inducing the expression of activator PA28 that associates with the proteasome and alters its proteolytic cleavage preference. Up-regulates as well MHC II complexes on the cell surface by promoting expression of several key molecules such as cathepsins B/CTSB, H/CTSH, and L/CTSL. Participates in the regulation of hematopoietic stem cells during development and under homeostatic conditions by affecting their development, quiescence, and differentiation. The polypeptide is Interferon gamma (IFNG) (Moschus berezovskii (Chinese forest musk deer)).